The following is a 145-amino-acid chain: MLTAEEKAAVTAFWGKVHVDEVGGEALGRLLVVYPWTQRFFESFGDLSTADAVMNNPKVKAHGKKVLDSFSDGMKHLDDLKGTFAALSELHCDKLHVDPENFKLLGNVLVVVLARNFGKEFTPVLQADFQKVVAGVANALAHRYH.

One can recognise a Globin domain in the interval 1-145 (MLTAEEKAAV…VANALAHRYH (145 aa)). Positions 62 and 91 each coordinate heme b.

Belongs to the globin family. Heterotetramer of two alpha chains and two beta chains. As to expression, red blood cells.

Involved in oxygen transport from the lung to the various peripheral tissues. The sequence is that of Hemoglobin subunit beta-A from Bos javanicus (Wild banteng).